Reading from the N-terminus, the 176-residue chain is Large ribosomal subunit protein uL6 (176 aa).

The segment covering 151 to 169 has biased composition (basic and acidic residues); the sequence is RPPEPYKGRGIKYTDEHIQ. Positions 151 to 176 are disordered; it reads RPPEPYKGRGIKYTDEHIQRKAGKTK.

Belongs to the universal ribosomal protein uL6 family. Part of the 50S ribosomal subunit.

This protein binds to the 23S rRNA, and is important in its secondary structure. It is located near the subunit interface in the base of the L7/L12 stalk, and near the tRNA binding site of the peptidyltransferase center. The protein is Large ribosomal subunit protein uL6 of Desulfosudis oleivorans (strain DSM 6200 / JCM 39069 / Hxd3) (Desulfococcus oleovorans).